The sequence spans 1169 residues: Polyamine-transporting ATPase 13A2 (1169 aa).

Over 1–44 the chain is Cytoplasmic; that stretch reads MSADSSLLMGSTPPSYGTLTTGTSIDPLSSSASSVRLSGYCGSP. An intramembrane segment occupies 45 to 65; sequence WRAIGYHAAVWMLAGIPWLLF. Residues 66–225 are Cytoplasmic-facing; that stretch reads RWKPLWGVRL…ISIPVKSYLQ (160 aa). A helical transmembrane segment spans residues 226–246; it reads LLADEALNPYYGFQAFSIALW. The Lumenal segment spans residues 247-250; the sequence is LADH. Residues 251–271 traverse the membrane as a helical segment; sequence YYWYALCIFLISAISICLALY. The Cytoplasmic segment spans residues 272–422; sequence KTRKQSLTLR…SFKFYKHSMK (151 aa). Residues 423 to 443 traverse the membrane as a helical segment; it reads FVAALSVLALLGTVYSIIILY. At 444-458 the chain is on the lumenal side; it reads RNRVPVREIVIRALD. A helical transmembrane segment spans residues 459–479; the sequence is LVTVVVPPALPAAMTVCTLYA. Residues 480-919 lie on the Cytoplasmic side of the membrane; it reads QSRLRTQGIF…REGRCSLDTS (440 aa). D508 functions as the 4-aspartylphosphate intermediate in the catalytic mechanism. Mg(2+)-binding residues include D867 and D871. The chain crosses the membrane as a helical span at residues 920 to 940; sequence FSVFKYMALYSLTQFISVLIL. Over 941 to 946 the chain is Lumenal; that stretch reads YTINTN. Residues 947–967 form a helical membrane-spanning segment; it reads LGDLQFLAIDLVITTTVAVLM. At 968–993 the chain is on the cytoplasmic side; that stretch reads SRTGPALTLVRARPPGALLSVPVLGS. Residues 994–1014 form a helical membrane-spanning segment; sequence LLLQVALVAGIQLGGYFLVIA. Topologically, residues 1015–1037 are lumenal; sequence QPWFVPLNRTVPAPDNLPNYENT. N1022 is a glycosylation site (N-linked (GlcNAc...) asparagine). A helical transmembrane segment spans residues 1038–1058; sequence VVFSLSGFQYLILAAAVSKGA. Topologically, residues 1059 to 1069 are cytoplasmic; sequence PFRQPLYTNVP. A helical transmembrane segment spans residues 1070 to 1090; sequence FLVALALLGSVLVGLILVPGL. The Lumenal portion of the chain corresponds to 1091-1106; sequence LQGPLGLRNIVDSSFK. Residues 1107-1127 form a helical membrane-spanning segment; it reads LLLLGLVAFNFVGAFMLESVL. Residues 1128–1169 are Cytoplasmic-facing; sequence DQCLPACLRWLRPKRASKKQFKRLQQELAEHPWPTLPVGSVR.

This sequence belongs to the cation transport ATPase (P-type) (TC 3.A.3) family. Type V subfamily. As to quaternary structure, interacts with MYCBP2; the interaction inhibits the ubiquitination of TSC2 by MYCBP2. Interacts with HDAC6; the interaction results in recruitment of HDAC6 to lysosomes to promote CTTN deacetylation. Autophosphorylated. Accumulates in an inactive autophosphorylated state and autophosphorylation is stimulated by phosphatidic acid and phosphatidylinositol 3,5-bisphosphate but not by Mn(2+) or Zn(2+). The presence of spermine results in a dose-dependent reduction in autophosphorylation.

Its subcellular location is the lysosome membrane. The protein localises to the late endosome membrane. It is found in the endosome. It localises to the multivesicular body membrane. The protein resides in the cytoplasmic vesicle. Its subcellular location is the autophagosome membrane. It carries out the reaction spermidine(out) + ATP + H2O = spermidine(in) + ADP + phosphate + H(+). The enzyme catalyses spermine(out) + ATP + H2O = spermine(in) + ADP + phosphate + H(+). With respect to regulation, accumulates in an inactive autophosphorylated state. The presence of spermine results in a dose-dependent reduction in autophosphorylation. Its function is as follows. ATPase which acts as a lysosomal polyamine exporter with high affinity for spermine. Also stimulates cellular uptake of polyamines and protects against polyamine toxicity. Plays a role in intracellular cation homeostasis and the maintenance of neuronal integrity. Contributes to cellular zinc homeostasis. Confers cellular protection against Mn(2+) and Zn(2+) toxicity and mitochondrial stress. Required for proper lysosomal and mitochondrial maintenance. Regulates the autophagy-lysosome pathway through the control of SYT11 expression at both transcriptional and post-translational levels. Facilitates recruitment of deacetylase HDAC6 to lysosomes to deacetylate CTTN, leading to actin polymerization, promotion of autophagosome-lysosome fusion and completion of autophagy. Promotes secretion of exosomes as well as secretion of SCNA via exosomes. Plays a role in lipid homeostasis. The protein is Polyamine-transporting ATPase 13A2 of Mus musculus (Mouse).